The following is a 1390-amino-acid chain: DNA-directed RNA polymerase subunit beta (1390 aa).

The protein belongs to the RNA polymerase beta chain family. As to quaternary structure, the RNAP catalytic core consists of 2 alpha, 1 beta, 1 beta' and 1 omega subunit. When a sigma factor is associated with the core the holoenzyme is formed, which can initiate transcription.

It carries out the reaction RNA(n) + a ribonucleoside 5'-triphosphate = RNA(n+1) + diphosphate. DNA-dependent RNA polymerase catalyzes the transcription of DNA into RNA using the four ribonucleoside triphosphates as substrates. The protein is DNA-directed RNA polymerase subunit beta of Mycoplasma genitalium (strain ATCC 33530 / DSM 19775 / NCTC 10195 / G37) (Mycoplasmoides genitalium).